Consider the following 524-residue polypeptide: Peptide chain release factor 3 (524 aa).

The tr-type G domain maps to A11–G278. Residues S20–T27, D88–H92, and N142–D145 contribute to the GTP site.

Belongs to the TRAFAC class translation factor GTPase superfamily. Classic translation factor GTPase family. PrfC subfamily.

The protein localises to the cytoplasm. Increases the formation of ribosomal termination complexes and stimulates activities of RF-1 and RF-2. It binds guanine nucleotides and has strong preference for UGA stop codons. It may interact directly with the ribosome. The stimulation of RF-1 and RF-2 is significantly reduced by GTP and GDP, but not by GMP. In Lacticaseibacillus paracasei (strain ATCC 334 / BCRC 17002 / CCUG 31169 / CIP 107868 / KCTC 3260 / NRRL B-441) (Lactobacillus paracasei), this protein is Peptide chain release factor 3.